Reading from the N-terminus, the 185-residue chain is Photosystem I assembly protein Ycf4 (185 aa).

3 consecutive transmembrane segments (helical) span residues 22-42 (FFFA…GFSS), 57-77 (ILFV…LFFS), and 101-121 (FYVF…LRVP).

This sequence belongs to the Ycf4 family.

The protein localises to the plastid. It is found in the chloroplast thylakoid membrane. Functionally, seems to be required for the assembly of the photosystem I complex. The protein is Photosystem I assembly protein Ycf4 of Gnetum parvifolium (Small-leaved jointfir).